A 556-amino-acid polypeptide reads, in one-letter code: (S)-N-methylcanadine 1-hydroxylase CYP82Y1 (556 aa).

A helical membrane pass occupies residues 18 to 38 (TAVGTLILAFLLTLSPVIIYY). Cysteine 500 serves as a coordination point for heme.

This sequence belongs to the cytochrome P450 family. Heme is required as a cofactor. In terms of tissue distribution, highly expressed in capsules. Expressed is stems.

The protein localises to the membrane. It carries out the reaction (S)-cis-N-methylcanadine + reduced [NADPH--hemoprotein reductase] + O2 = (S)-1-hydroxy-N-methylcanadine + oxidized [NADPH--hemoprotein reductase] + H2O + H(+). Its pathway is alkaloid biosynthesis. Its function is as follows. Cytochrome P450 involved in the biosynthesis of the benzylisoquinoline alkaloid noscapine. Converts (S)-N-methylcanadine to (S)-1-hydroxy-N-methylcanadine. The protein is (S)-N-methylcanadine 1-hydroxylase CYP82Y1 of Papaver somniferum (Opium poppy).